The primary structure comprises 202 residues: MTTTVGIAVKDGVVLATDKRVTAGYYIAHKRGEKIWKIDDHVAATMSGGVADLQSVLSFLTLRAHEYKIEYKRPIPISALVNYMSLILFYSRPYIYIVHSIIGGVDEEEGAVLYMVDWLGTVTKEKYIATGSGSPYAKGALEVGYREDMTLEDAVDLAIKAVKAAIRNDPGSGEGIDVVVITRKEGFKRVFTTQQKLVLPSL.

Position 1 (methionine 1) is a propeptide, removed in mature form; by autocatalysis. The active-site Nucleophile is threonine 2.

This sequence belongs to the peptidase T1B family. The 20S proteasome core is composed of 14 alpha and 14 beta subunits that assemble into four stacked heptameric rings, resulting in a barrel-shaped structure. The two inner rings, each composed of seven catalytic beta subunits, are sandwiched by two outer rings, each composed of seven alpha subunits. The catalytic chamber with the active sites is on the inside of the barrel. Has a gated structure, the ends of the cylinder being occluded by the N-termini of the alpha-subunits. Is capped at one or both ends by the proteasome regulatory ATPase, PAN.

The protein resides in the cytoplasm. The catalysed reaction is Cleavage of peptide bonds with very broad specificity.. The formation of the proteasomal ATPase PAN-20S proteasome complex, via the docking of the C-termini of PAN into the intersubunit pockets in the alpha-rings, triggers opening of the gate for substrate entry. Interconversion between the open-gate and close-gate conformations leads to a dynamic regulation of the 20S proteasome proteolysis activity. Component of the proteasome core, a large protease complex with broad specificity involved in protein degradation. The polypeptide is Proteasome subunit beta 1 (Pyrobaculum aerophilum (strain ATCC 51768 / DSM 7523 / JCM 9630 / CIP 104966 / NBRC 100827 / IM2)).